The primary structure comprises 291 residues: 4-hydroxy-tetrahydrodipicolinate synthase (291 aa).

Threonine 47 contacts pyruvate. Tyrosine 134 (proton donor/acceptor) is an active-site residue. Lysine 162 serves as the catalytic Schiff-base intermediate with substrate. Isoleucine 205 provides a ligand contact to pyruvate.

The protein belongs to the DapA family. In terms of assembly, homotetramer; dimer of dimers.

Its subcellular location is the cytoplasm. The enzyme catalyses L-aspartate 4-semialdehyde + pyruvate = (2S,4S)-4-hydroxy-2,3,4,5-tetrahydrodipicolinate + H2O + H(+). It functions in the pathway amino-acid biosynthesis; L-lysine biosynthesis via DAP pathway; (S)-tetrahydrodipicolinate from L-aspartate: step 3/4. In terms of biological role, catalyzes the condensation of (S)-aspartate-beta-semialdehyde [(S)-ASA] and pyruvate to 4-hydroxy-tetrahydrodipicolinate (HTPA). This Methanospirillum hungatei JF-1 (strain ATCC 27890 / DSM 864 / NBRC 100397 / JF-1) protein is 4-hydroxy-tetrahydrodipicolinate synthase.